We begin with the raw amino-acid sequence, 38 residues long: Photosystem II reaction center protein L (38 aa).

Residues Ser17–Phe37 traverse the membrane as a helical segment.

This sequence belongs to the PsbL family. In terms of assembly, PSII is composed of 1 copy each of membrane proteins PsbA, PsbB, PsbC, PsbD, PsbE, PsbF, PsbH, PsbI, PsbJ, PsbK, PsbL, PsbM, PsbT, PsbX, PsbY, PsbZ, Psb30/Ycf12, at least 3 peripheral proteins of the oxygen-evolving complex and a large number of cofactors. It forms dimeric complexes.

It localises to the plastid. The protein resides in the chloroplast thylakoid membrane. One of the components of the core complex of photosystem II (PSII). PSII is a light-driven water:plastoquinone oxidoreductase that uses light energy to abstract electrons from H(2)O, generating O(2) and a proton gradient subsequently used for ATP formation. It consists of a core antenna complex that captures photons, and an electron transfer chain that converts photonic excitation into a charge separation. This subunit is found at the monomer-monomer interface and is required for correct PSII assembly and/or dimerization. This chain is Photosystem II reaction center protein L, found in Tetradesmus obliquus (Green alga).